Here is a 404-residue protein sequence, read N- to C-terminus: MHELIKYQFNTRRKKYGTGAALSLLNGNVGHEVLAFHKKLPNYAVTPLHNLAHLSQRLGLGSIHIKDESWRFGLNAFKGLGGSYAVGKYLADKLQCDINSLSFAALNTPEIKEKIKDCVFVTATDGNHGRGVAWAAEQLGLKAVVYMPKGSSLIRAENIRHHGAECTITDLNYDDAVRLAHRMAQTKGWVLLQDTAWTGYEEIPTWIMQGYMTLAVEAYEQLAETNSPLPTHLILQAGVGSFAGSVMGYFVEKMQENIPNIIVVEPHQANCLYQSAVMDDGQPHCVTGDMATIMAGLACGEPNIISWPIIRDNTSCFISADDCLAAKGMRISAAPRPGTDTPFISGESGAIGVGLLYELMNNMHYQDLANRLQLDASAHVLLISTEGDTSPDIYEDIVWNGRSA.

Position 78 is an N6-(pyridoxal phosphate)lysine (lysine 78).

The protein belongs to the diaminopropionate ammonia-lyase family. As to quaternary structure, homodimer. Pyridoxal 5'-phosphate is required as a cofactor.

The enzyme catalyses (S)-2,3-diaminopropanoate + H2O + H(+) = pyruvate + 2 NH4(+). It carries out the reaction (R)-2,3-diaminopropanoate + H2O + H(+) = pyruvate + 2 NH4(+). Its activity is regulated as follows. Competitively inhibited by L- and D-alanine. Catalyzes the alpha,beta-elimination reaction of both L- and D-alpha,beta-diaminopropionate (DAP) to form pyruvate and ammonia. In vitro L- and D-isomers of serine are also degraded, though slowly; it is the only serine dehydratase which can eliminate an amino group at the beta-carbon position. In vivo L-, D- and a mixure of DL-DAP allow growth. DL-DAP is toxic in the absence of this enzyme, it may inhibit enzymes involved in the synthesis of pyruvate and aspartate, as well as amino acids derived from them. This Salmonella typhimurium (strain LT2 / SGSC1412 / ATCC 700720) protein is Diaminopropionate ammonia-lyase (dpaL).